A 330-amino-acid polypeptide reads, in one-letter code: Glycerol-3-phosphate dehydrogenase [NAD(P)+] (330 aa).

NADPH is bound by residues Ser-11, Phe-12, Arg-32, and Lys-106. 3 residues coordinate sn-glycerol 3-phosphate: Lys-106, Gly-133, and Ser-135. Ala-137 contacts NADPH. Sn-glycerol 3-phosphate is bound by residues Lys-188, Asp-241, Ser-251, Arg-252, and Asn-253. Lys-188 acts as the Proton acceptor in catalysis. NADPH is bound at residue Arg-252. Residues Val-276 and Glu-278 each coordinate NADPH.

It belongs to the NAD-dependent glycerol-3-phosphate dehydrogenase family.

It is found in the cytoplasm. The catalysed reaction is sn-glycerol 3-phosphate + NAD(+) = dihydroxyacetone phosphate + NADH + H(+). The enzyme catalyses sn-glycerol 3-phosphate + NADP(+) = dihydroxyacetone phosphate + NADPH + H(+). The protein operates within membrane lipid metabolism; glycerophospholipid metabolism. Catalyzes the reduction of the glycolytic intermediate dihydroxyacetone phosphate (DHAP) to sn-glycerol 3-phosphate (G3P), the key precursor for phospholipid synthesis. The protein is Glycerol-3-phosphate dehydrogenase [NAD(P)+] of Clostridium botulinum (strain Eklund 17B / Type B).